Consider the following 373-residue polypeptide: GDP-mannose 4,6 dehydratase 2 (373 aa).

The segment covering 1 to 15 (MASENNGSRSDSESI) has biased composition (polar residues). Residues 1-21 (MASENNGSRSDSESITAPKAD) form a disordered region. NADP(+) contacts are provided by residues 35–40 (GITGQD), Arg-60, 91–92 (DL), 113–117 (LAAQS), and Tyr-128. A substrate-binding site is contributed by Ser-117. Ser-162 contacts substrate. Residue Ser-162 is part of the active site. Residues Glu-164 and Tyr-185 each act as nucleophile in the active site. Tyr-185 lines the substrate pocket. NADP(+) is bound at residue Lys-189. Asn-214 is a substrate binding site. Residues His-215 and Arg-220 each coordinate NADP(+). Residues 220 to 228 (RGENFVTRK), Gly-247, Arg-253, and 314 to 317 (RPAE) each bind substrate.

It belongs to the NAD(P)-dependent epimerase/dehydratase family. GDP-mannose 4,6-dehydratase subfamily. As to quaternary structure, homotetramer. Binds to GER1. NADP(+) is required as a cofactor. As to expression, expressed in roots, flowers, siliques, leaves and stems. Not expressed in the root meristem and the proximal part of the elongation zone, or in emerging lateral roots. Expressed in trichomes and guard cells, and in pollen just before anthesis.

It carries out the reaction GDP-alpha-D-mannose = GDP-4-dehydro-alpha-D-rhamnose + H2O. It functions in the pathway nucleotide-sugar biosynthesis; GDP-L-fucose biosynthesis via de novo pathway; GDP-L-fucose from GDP-alpha-D-mannose: step 1/2. Functionally, catalyzes the conversion of GDP-D-mannose to GDP-4-dehydro-6-deoxy-D-mannose. In Arabidopsis thaliana (Mouse-ear cress), this protein is GDP-mannose 4,6 dehydratase 2 (MUR1).